The chain runs to 585 residues: FAD-linked oxidoreductase apf9 (585 aa).

A signal peptide spans 1–19; sequence MKPHTVSLVLSNLASLAAA. N-linked (GlcNAc...) asparagine glycans are attached at residues asparagine 40, asparagine 92, and asparagine 117. The FAD-binding PCMH-type domain maps to 108 to 294; it reads IGNSPVYVVN…TEITVKTYPT (187 aa). The residue at position 145 (histidine 145) is a Pros-8alpha-FAD histidine. Residues asparagine 352, asparagine 412, and asparagine 495 are each glycosylated (N-linked (GlcNAc...) asparagine).

Belongs to the oxygen-dependent FAD-linked oxidoreductase family. FAD serves as cofactor.

It participates in secondary metabolite biosynthesis. Functionally, FAD-linked oxidoreductase; part of the gene cluster that mediates the biosynthesis of the cyclic tetrapeptide apicidin F (APF). The non-ribosomal peptide synthetase apf1 incorporates four different amino acids to produce apicidin F: L-phenylalanine, D-pipecolic acid (D-pip), N-methoxy-L-tryptophan and L-2-aminooctanedioic acid. L-Phenylalanine is the only proteinogenic amino acid directly used by apf1. The 3 other apf1 substrates are non-proteinogenic and have to be modified by other enzymes of the cluster. Lysine is converted to delta-1-pyrroline-5-carboxylate (P5C) which is reduced to L-pipecolic acid (L-pip) by apf3. L-pip is epimerized to D-pip, probably by apf1 activity, prior to incorporation. L-Tryptophan is N-oxidyzed by one of the cytochrome P450 monooxygenases (apf7 or apf8), and further methylated at the hydroxy group by the O-methyltransferase apf6 to yield N-methoxy-L-tryptophan. The synthesis of the fourth apf1 substrate is more complex. The fatty acid synthase apf5 is involved in the synthesis of the octanoic acid backbone of L-2-aminooctanedioic acid by fixing one acetyl-CoA unit and three malonyl-CoA units. Then one of the cytochrome P450 monooxygenases (apf7 or apf8) may oxidize this backbone to 2-oxooctanoic acid. The aminotransferase apf4 is predicted to catalyze the exchange of the keto group with an amino group. The next step would be the oxidation of 2-aminooctanoic acid by one of the cytochrome P450 monooxygenases (apf7 or apf8). The last step is the oxidation of 2-amino-8-hydroxyoctanoic acid to 2-aminooctanedioic acid is catalyzed by the FAD-dependent monooxygenase apf9. In Gibberella fujikuroi (strain CBS 195.34 / IMI 58289 / NRRL A-6831) (Bakanae and foot rot disease fungus), this protein is FAD-linked oxidoreductase apf9.